The primary structure comprises 142 residues: Nucleoside diphosphate kinase (142 aa).

ATP contacts are provided by Lys11, Phe59, Arg87, Thr93, Arg104, and Asn114. His117 functions as the Pros-phosphohistidine intermediate in the catalytic mechanism.

It belongs to the NDK family. As to quaternary structure, homotetramer. Requires Mg(2+) as cofactor.

It localises to the cytoplasm. It catalyses the reaction a 2'-deoxyribonucleoside 5'-diphosphate + ATP = a 2'-deoxyribonucleoside 5'-triphosphate + ADP. It carries out the reaction a ribonucleoside 5'-diphosphate + ATP = a ribonucleoside 5'-triphosphate + ADP. Major role in the synthesis of nucleoside triphosphates other than ATP. The ATP gamma phosphate is transferred to the NDP beta phosphate via a ping-pong mechanism, using a phosphorylated active-site intermediate. This is Nucleoside diphosphate kinase from Hahella chejuensis (strain KCTC 2396).